A 330-amino-acid chain; its full sequence is Methionyl-tRNA formyltransferase (330 aa).

112–115 (SLLP) provides a ligand contact to (6S)-5,6,7,8-tetrahydrofolate.

This sequence belongs to the Fmt family.

The enzyme catalyses L-methionyl-tRNA(fMet) + (6R)-10-formyltetrahydrofolate = N-formyl-L-methionyl-tRNA(fMet) + (6S)-5,6,7,8-tetrahydrofolate + H(+). In terms of biological role, attaches a formyl group to the free amino group of methionyl-tRNA(fMet). The formyl group appears to play a dual role in the initiator identity of N-formylmethionyl-tRNA by promoting its recognition by IF2 and preventing the misappropriation of this tRNA by the elongation apparatus. This is Methionyl-tRNA formyltransferase from Alcanivorax borkumensis (strain ATCC 700651 / DSM 11573 / NCIMB 13689 / SK2).